The sequence spans 474 residues: 3-isopropylmalate dehydratase large subunit (474 aa).

The [4Fe-4S] cluster site is built by C353, C414, and C417.

This sequence belongs to the aconitase/IPM isomerase family. LeuC type 1 subfamily. Heterodimer of LeuC and LeuD. It depends on [4Fe-4S] cluster as a cofactor.

The enzyme catalyses (2R,3S)-3-isopropylmalate = (2S)-2-isopropylmalate. It functions in the pathway amino-acid biosynthesis; L-leucine biosynthesis; L-leucine from 3-methyl-2-oxobutanoate: step 2/4. Its function is as follows. Catalyzes the isomerization between 2-isopropylmalate and 3-isopropylmalate, via the formation of 2-isopropylmaleate. The protein is 3-isopropylmalate dehydratase large subunit of Pseudomonas paraeruginosa (strain DSM 24068 / PA7) (Pseudomonas aeruginosa (strain PA7)).